A 294-amino-acid polypeptide reads, in one-letter code: Acetylglutamate kinase (294 aa).

Residues 63–64, R85, and N188 contribute to the substrate site; that span reads GG.

This sequence belongs to the acetylglutamate kinase family. ArgB subfamily.

It localises to the cytoplasm. The enzyme catalyses N-acetyl-L-glutamate + ATP = N-acetyl-L-glutamyl 5-phosphate + ADP. It functions in the pathway amino-acid biosynthesis; L-arginine biosynthesis; N(2)-acetyl-L-ornithine from L-glutamate: step 2/4. Its function is as follows. Catalyzes the ATP-dependent phosphorylation of N-acetyl-L-glutamate. The protein is Acetylglutamate kinase of Methanococcus vannielii (strain ATCC 35089 / DSM 1224 / JCM 13029 / OCM 148 / SB).